A 384-amino-acid polypeptide reads, in one-letter code: GDSL esterase/lipase ENOD8 (384 aa).

An N-terminal signal peptide occupies residues 1–31; the sequence is MKFMAKIELSRHIPLVTLIVLVLCITPPIFA. The Nucleophile role is filled by serine 46. N-linked (GlcNAc...) asparagine glycosylation is found at asparagine 105, asparagine 191, asparagine 198, asparagine 276, and asparagine 330. Active-site residues include aspartate 349 and histidine 352.

Belongs to the 'GDSL' lipolytic enzyme family. Expressed in root nodules (at protein level).

The protein localises to the symbiosome. Has lipase and esterase activities. Probably involved in root nodule physiology. The chain is GDSL esterase/lipase ENOD8 from Medicago truncatula (Barrel medic).